Consider the following 332-residue polypeptide: mRNA-decapping enzyme 1 (332 aa).

Over residues 141–173 the composition is skewed to low complexity; it reads ARAAKAASEAPQASVPAPTQAPAAPAQAPQMAP. Residues 141–175 are disordered; the sequence is ARAAKAASEAPQASVPAPTQAPAAPAQAPQMAPQA.

Belongs to the DCP1 family. As to quaternary structure, may be a component of the decapping complex composed of dcap-1 and dcap-2. As to expression, expressed in neurons including touch receptor neurons and motor neurons.

It localises to the cytoplasm. It is found in the cytoplasmic granule. Component of the decapping complex necessary for the degradation of mRNAs, both in normal mRNA turnover and in nonsense-mediated mRNA decay. In contrast to orthologs, does not possess decapping activity and does not remove the 7-methyl guanine cap structure from mRNA molecules. In the nervous system, negatively regulates the expression of insulin-like peptide ins-7, which in turn promotes longevity. This may in part be through promoting the activity of daf-16 in distal tissues. Required for the developmental axon guidance and regrowth of PLM touch receptor neurons. In ADL sensory neurons, plays a role in ciliary shape formation. Acts in neurons to promote larval survival at high temperatures by negatively regulating lin-14 expression. This is mRNA-decapping enzyme 1 from Caenorhabditis elegans.